We begin with the raw amino-acid sequence, 418 residues long: Tyrosine--tRNA ligase 1 (418 aa).

Tyr34 lines the L-tyrosine pocket. A 'HIGH' region motif is present at residues 39 to 48; sequence PTADSLHIGH. The L-tyrosine site is built by Tyr169 and Gln173. The 'KMSKS' region signature appears at 230–234; it reads KFGKT. ATP is bound at residue Lys233. In terms of domain architecture, S4 RNA-binding spans 352 to 418; sequence TVLIDLLVES…GKKKYFLIRY (67 aa).

It belongs to the class-I aminoacyl-tRNA synthetase family. TyrS type 1 subfamily. In terms of assembly, homodimer.

The protein resides in the cytoplasm. The catalysed reaction is tRNA(Tyr) + L-tyrosine + ATP = L-tyrosyl-tRNA(Tyr) + AMP + diphosphate + H(+). Functionally, catalyzes the attachment of tyrosine to tRNA(Tyr) in a two-step reaction: tyrosine is first activated by ATP to form Tyr-AMP and then transferred to the acceptor end of tRNA(Tyr). The protein is Tyrosine--tRNA ligase 1 of Bacillus anthracis.